A 55-amino-acid chain; its full sequence is Photosystem I reaction center subunit IX (55 aa).

The chain crosses the membrane as a helical span at residues 7–27 (YLSVAPVLSTLWFGSLAGLLI).

This sequence belongs to the PsaJ family.

It is found in the plastid. The protein resides in the chloroplast thylakoid membrane. Its function is as follows. May help in the organization of the PsaE and PsaF subunits. In Gossypium barbadense (Sea Island cotton), this protein is Photosystem I reaction center subunit IX.